Reading from the N-terminus, the 783-residue chain is Transcription factor Sp3 (783 aa).

Basic and acidic residues predominate over residues 1–12 (MTAPEKPVKQEE). The segment at 1-55 (MTAPEKPVKQEEMAALDVDGGGGGGGHGEYLQQQQQQQQQHGNGAAAAAAQDTQP) is disordered. A compositionally biased stretch (gly residues) spans 19–28 (DGGGGGGGHG). Residues 29 to 51 (EYLQQQQQQQQQHGNGAAAAAAQ) are compositionally biased toward low complexity. The residue at position 72 (serine 72) is a Phosphoserine. Residue lysine 122 forms a Glycyl lysine isopeptide (Lys-Gly) (interchain with G-Cter in SUMO) linkage. Positions 140 to 239 (QYVLPLQNLQ…IPQTGQVQVQ (100 aa)) are transactivation domain (Gln-rich). Residues 302 to 340 (GQAMDSSDNSERTGERVSPDVNETNADTDLFVPTSSSSQ) are disordered. Positions 310–319 (NSERTGERVS) are enriched in basic and acidic residues. Over residues 322-340 (VNETNADTDLFVPTSSSSQ) the composition is skewed to polar residues. The tract at residues 352–501 (QQNTNSLTTT…TPVQTLTLGQ (150 aa)) is transactivation domain (Gln-rich). Positions 463-471 (ITWQTFQVQ) match the 9aaTAD motif. The interval 536-622 (IQLHPGENAD…RGTNLGKKKQ (87 aa)) is repressor domain. Lysine 553 bears the N6-acetyllysine; alternate mark. Residue lysine 553 forms a Glycyl lysine isopeptide (Lys-Gly) (interchain with G-Cter in SUMO); alternate linkage. Lysine 553 participates in a covalent cross-link: Glycyl lysine isopeptide (Lys-Gly) (interchain with G-Cter in SUMO1); alternate. A Glycyl lysine isopeptide (Lys-Gly) (interchain with G-Cter in SUMO2); alternate cross-link involves residue lysine 553. Serine 565 and serine 568 each carry phosphoserine. Residue lysine 595 forms a Glycyl lysine isopeptide (Lys-Gly) (interchain with G-Cter in SUMO2) linkage. The C2H2-type 1 zinc-finger motif lies at 623–647 (HICHIPGCGKVYGKTSHLRAHLRWH). Position 648 is a phosphoserine (serine 648). 2 consecutive C2H2-type zinc fingers follow at residues 653 to 677 (FICNWMFCGKRFTRSDELQRHRRTH) and 683 to 705 (FVCPECSKRFMRSDHLAKHIKTH).

The protein belongs to the Sp1 C2H2-type zinc-finger protein family. As to quaternary structure, interacts with HLTF; the interaction may be required for basal transcriptional activity of HLTF. Interacts with HDAC1; the interaction deacetylates SP3 and regulates its transcriptional activity. Interacts with HDAC2 (preferably the CK2-phosphorylated form); the interaction deacetylates SP3 and regulates its transcriptional activity. Ceramides can also regulate acetylation/deacetylation events through altering the interaction of HDAC with SP3. Interacts with MEIS2 isoform Meis2D and PBX1 isoform PBX1a. Acetylated by histone acetyltransferase p300, deacetylated by HDACs. Acetylation/deacetylation states regulate transcriptional activity. Acetylation appears to activate transcription. Alternate sumoylation and acetylation at Lys-553 also control transcriptional activity. Post-translationally, sumoylated on all isoforms. Sumoylated on 2 sites in longer isoforms with Lys-553 being the major site. Sumoylation at this site promotes nuclear localization to the nuclear periphery, nuclear dots and PML nuclear bodies. Sumoylation on Lys-553 represses the transactivation activity, except for the largest isoform which has little effect on transactivation. Alternate sumoylation and acetylation at Lys-553 also control transcriptional activity.

It localises to the nucleus. Its subcellular location is the PML body. Functionally, transcriptional factor that can act as an activator or repressor depending on isoform and/or post-translational modifications. Binds to GT and GC boxes promoter elements. Competes with SP1 for the GC-box promoters. Weak activator of transcription but can activate a number of genes involved in different processes such as cell-cycle regulation, hormone-induction and house-keeping. This is Transcription factor Sp3 (Sp3) from Mus musculus (Mouse).